The chain runs to 811 residues: MKAIFALRQAVASQLKKSTASSHPLPRTTASTSQDETIWQKIHRSRFVRIAHPPVMLGITVVSLTGVVGYRFYNQPQLSVGTESPYTIYAPEDGSFVDERTTEEKRKEVRAGTIPRLQRDNELTAQLKQERSQYLDAINQLRYLAGTFPYIDTKIFTLEQQHLLRSLGPGEWQQLEDYISYGQPLPMASPQLAKLQQLFDQQKATTSPETMAGLLTSIRTAQDRYGRVTARLAEVKADRQITNNQIGALKLDGPTWQTTQQTIIQVHDRILTQGLPAGITAPLLGETVQLHLRNILPPQAHQVAENSLNNLLKDKYNLTVDKEATKNLAEKAVLAMENVKVSAEKNSVIVRAGEVITQEQFVLLDGYGLSQRQVNWQGLLRTAGLVGGALIIFCGVSRRIHRPLRRRDHILLCLLSVSTPVLFLLDPVYNNLPAISLLTSSFYGPTLAITQVVLVGGLSAFAMESIVWEYLLGSAAAALLAGMIASKLRSRDELALLGVGVGATQGIVYLFTYLIVNASAVTIIWYTALPSAIVYGLLGLAWSAMAIGVSPYLERLFDVVTPTRLVELSNPNCPLLQRLAKEAPGTFQHTLFVACLAESAARELRCNVELVRTGTLYHDIGKMHDPLGFIENQMGGPNKHDEINDPYVSVDIIKKHVSEGLVMARRYGLPQVVRDFIPEHQGQMLISYFYIQAKEAAERAGEPPVNEEEFRYTGPIPQSRETGIVMLADSCEAALRSLREANPETAMAMVNRIFKARWRDNQLQDSGLKYEELPIIADVFVRVWQQFHHQRIAYPKAALDVQVTSPSTTRF.

The interval 16 to 35 (KKSTASSHPLPRTTASTSQD) is disordered. Helical transmembrane passes span 50 to 70 (IAHP…VVGY), 376 to 396 (WQGL…FCGV), 409 to 429 (HILL…DPVY), 442 to 462 (FYGP…SAFA), 466 to 486 (IVWE…MIAS), 496 to 516 (LLGV…YLIV), and 529 to 549 (LPSA…AIGV). The region spanning 586–734 (TFQHTLFVAC…VMLADSCEAA (149 aa)) is the HD domain.

It localises to the cell membrane. This is an uncharacterized protein from Synechocystis sp. (strain ATCC 27184 / PCC 6803 / Kazusa).